Here is a 1417-residue protein sequence, read N- to C-terminus: DNA-directed RNA polymerase subunit beta' (1417 aa).

The Zn(2+) site is built by Cys-68, Cys-70, Cys-83, and Cys-86. Residues Asp-458, Asp-460, and Asp-462 each contribute to the Mg(2+) site. Zn(2+)-binding residues include Cys-811, Cys-884, Cys-891, and Cys-894.

This sequence belongs to the RNA polymerase beta' chain family. The RNAP catalytic core consists of 2 alpha, 1 beta, 1 beta' and 1 omega subunit. When a sigma factor is associated with the core the holoenzyme is formed, which can initiate transcription. It depends on Mg(2+) as a cofactor. Zn(2+) serves as cofactor.

It catalyses the reaction RNA(n) + a ribonucleoside 5'-triphosphate = RNA(n+1) + diphosphate. In terms of biological role, DNA-dependent RNA polymerase catalyzes the transcription of DNA into RNA using the four ribonucleoside triphosphates as substrates. This Francisella tularensis subsp. tularensis (strain FSC 198) protein is DNA-directed RNA polymerase subunit beta'.